Reading from the N-terminus, the 101-residue chain is Large ribosomal subunit protein uL24 (101 aa).

Belongs to the universal ribosomal protein uL24 family. As to quaternary structure, part of the 50S ribosomal subunit.

Functionally, one of two assembly initiator proteins, it binds directly to the 5'-end of the 23S rRNA, where it nucleates assembly of the 50S subunit. One of the proteins that surrounds the polypeptide exit tunnel on the outside of the subunit. The sequence is that of Large ribosomal subunit protein uL24 from Streptococcus suis (strain 98HAH33).